The following is a 54-amino-acid chain: ATP synthase F(0) complex subunit 8 (54 aa).

Residues 13–35 (ALSLWVCFPLMMLSLSSFLPLTL) traverse the membrane as a helical segment.

Belongs to the ATPase protein 8 family. As to quaternary structure, component of the ATP synthase complex composed at least of ATP5F1A/subunit alpha, ATP5F1B/subunit beta, ATP5MC1/subunit c (homooctomer), MT-ATP6/subunit a, MT-ATP8/subunit 8, ATP5ME/subunit e, ATP5MF/subunit f, ATP5MG/subunit g, ATP5MK/subunit k, ATP5MJ/subunit j, ATP5F1C/subunit gamma, ATP5F1D/subunit delta, ATP5F1E/subunit epsilon, ATP5PF/subunit F6, ATP5PB/subunit b, ATP5PD/subunit d, ATP5PO/subunit OSCP. ATP synthase complex consists of a soluble F(1) head domain (subunits alpha(3) and beta(3)) - the catalytic core - and a membrane F(0) domain - the membrane proton channel (subunits c, a, 8, e, f, g, k and j). These two domains are linked by a central stalk (subunits gamma, delta, and epsilon) rotating inside the F1 region and a stationary peripheral stalk (subunits F6, b, d, and OSCP).

The protein resides in the mitochondrion membrane. Subunit 8, of the mitochondrial membrane ATP synthase complex (F(1)F(0) ATP synthase or Complex V) that produces ATP from ADP in the presence of a proton gradient across the membrane which is generated by electron transport complexes of the respiratory chain. ATP synthase complex consist of a soluble F(1) head domain - the catalytic core - and a membrane F(1) domain - the membrane proton channel. These two domains are linked by a central stalk rotating inside the F(1) region and a stationary peripheral stalk. During catalysis, ATP synthesis in the catalytic domain of F(1) is coupled via a rotary mechanism of the central stalk subunits to proton translocation. In vivo, can only synthesize ATP although its ATP hydrolase activity can be activated artificially in vitro. Part of the complex F(0) domain. In Myxine glutinosa (Atlantic hagfish), this protein is ATP synthase F(0) complex subunit 8.